A 240-amino-acid polypeptide reads, in one-letter code: Pyridoxine 5'-phosphate synthase (240 aa).

Asn-7 serves as a coordination point for 3-amino-2-oxopropyl phosphate. Position 9-10 (9-10) interacts with 1-deoxy-D-xylulose 5-phosphate; it reads DH. Arg-18 contacts 3-amino-2-oxopropyl phosphate. His-43 serves as the catalytic Proton acceptor. 1-deoxy-D-xylulose 5-phosphate-binding residues include Arg-45 and His-50. The Proton acceptor role is filled by Glu-70. 1-deoxy-D-xylulose 5-phosphate is bound at residue Thr-100. His-191 acts as the Proton donor in catalysis. Residues Gly-192 and 213-214 each bind 3-amino-2-oxopropyl phosphate; that span reads GH.

It belongs to the PNP synthase family. Homooctamer; tetramer of dimers.

It is found in the cytoplasm. The catalysed reaction is 3-amino-2-oxopropyl phosphate + 1-deoxy-D-xylulose 5-phosphate = pyridoxine 5'-phosphate + phosphate + 2 H2O + H(+). The protein operates within cofactor biosynthesis; pyridoxine 5'-phosphate biosynthesis; pyridoxine 5'-phosphate from D-erythrose 4-phosphate: step 5/5. Catalyzes the complicated ring closure reaction between the two acyclic compounds 1-deoxy-D-xylulose-5-phosphate (DXP) and 3-amino-2-oxopropyl phosphate (1-amino-acetone-3-phosphate or AAP) to form pyridoxine 5'-phosphate (PNP) and inorganic phosphate. This chain is Pyridoxine 5'-phosphate synthase, found in Gloeothece citriformis (strain PCC 7424) (Cyanothece sp. (strain PCC 7424)).